The primary structure comprises 90 residues: Small ribosomal subunit protein uS15 (90 aa).

It belongs to the universal ribosomal protein uS15 family. Part of the 30S ribosomal subunit. Forms a bridge to the 50S subunit in the 70S ribosome, contacting the 23S rRNA.

Functionally, one of the primary rRNA binding proteins, it binds directly to 16S rRNA where it helps nucleate assembly of the platform of the 30S subunit by binding and bridging several RNA helices of the 16S rRNA. Forms an intersubunit bridge (bridge B4) with the 23S rRNA of the 50S subunit in the ribosome. This is Small ribosomal subunit protein uS15 from Mycoplasmoides gallisepticum (strain R(low / passage 15 / clone 2)) (Mycoplasma gallisepticum).